The sequence spans 254 residues: 4-hydroxy-tetrahydrodipicolinate reductase (254 aa).

Residue Gly7 to Ile12 participates in NAD(+) binding. Residue Arg35 participates in NADP(+) binding. Residues Gly91 to Thr93 and Ala115 to Met118 contribute to the NAD(+) site. His147 acts as the Proton donor/acceptor in catalysis. His148 contacts (S)-2,3,4,5-tetrahydrodipicolinate. The active-site Proton donor is Lys151. Residue Gly157–Thr158 participates in (S)-2,3,4,5-tetrahydrodipicolinate binding.

It belongs to the DapB family.

Its subcellular location is the cytoplasm. It catalyses the reaction (S)-2,3,4,5-tetrahydrodipicolinate + NAD(+) + H2O = (2S,4S)-4-hydroxy-2,3,4,5-tetrahydrodipicolinate + NADH + H(+). The catalysed reaction is (S)-2,3,4,5-tetrahydrodipicolinate + NADP(+) + H2O = (2S,4S)-4-hydroxy-2,3,4,5-tetrahydrodipicolinate + NADPH + H(+). It functions in the pathway amino-acid biosynthesis; L-lysine biosynthesis via DAP pathway; (S)-tetrahydrodipicolinate from L-aspartate: step 4/4. In terms of biological role, catalyzes the conversion of 4-hydroxy-tetrahydrodipicolinate (HTPA) to tetrahydrodipicolinate. This Helicobacter pylori (strain Shi470) protein is 4-hydroxy-tetrahydrodipicolinate reductase.